We begin with the raw amino-acid sequence, 290 residues long: Small ribosomal subunit protein uS2 (290 aa).

Residues 269-290 (WEAEASGDWAAESAQPNPETKW) are disordered.

The protein belongs to the universal ribosomal protein uS2 family. Component of the small ribosomal subunit. Mature ribosomes consist of a small (40S) and a large (60S) subunit. The 40S subunit contains about 33 different proteins and 1 molecule of RNA (18S). The 60S subunit contains about 49 different proteins and 3 molecules of RNA (25S, 5.8S and 5S). Interacts with rps21.

It is found in the cytoplasm. In terms of biological role, required for the assembly and/or stability of the 40S ribosomal subunit. Required for the processing of the 20S rRNA-precursor to mature 18S rRNA in a late step of the maturation of 40S ribosomal subunits. In Talaromyces marneffei (strain ATCC 18224 / CBS 334.59 / QM 7333) (Penicillium marneffei), this protein is Small ribosomal subunit protein uS2 (rps0).